Consider the following 227-residue polypeptide: Probable minor pilin MMP0600 (227 aa).

A propeptide spanning residues 1–7 is cleaved from the precursor; it reads MAKFSKG. The QXSXEXXXL motif lies at 8–16; it reads QISIELILL.

The N-terminus is probably cleaved by the prepilin peptidase EppA, which recognizes the class III signal sequence.

It is found in the secreted. The protein localises to the cell surface. It localises to the fimbrium. The chain is Probable minor pilin MMP0600 from Methanococcus maripaludis (strain DSM 14266 / JCM 13030 / NBRC 101832 / S2 / LL).